A 182-amino-acid chain; its full sequence is ATP-dependent protease subunit HslV (182 aa).

The active site involves threonine 12. The Na(+) site is built by alanine 167, cysteine 170, and threonine 173.

This sequence belongs to the peptidase T1B family. HslV subfamily. In terms of assembly, a double ring-shaped homohexamer of HslV is capped on each side by a ring-shaped HslU homohexamer. The assembly of the HslU/HslV complex is dependent on binding of ATP.

It localises to the cytoplasm. The enzyme catalyses ATP-dependent cleavage of peptide bonds with broad specificity.. Allosterically activated by HslU binding. In terms of biological role, protease subunit of a proteasome-like degradation complex believed to be a general protein degrading machinery. This Paramagnetospirillum magneticum (strain ATCC 700264 / AMB-1) (Magnetospirillum magneticum) protein is ATP-dependent protease subunit HslV.